Reading from the N-terminus, the 91-residue chain is Non-hemolytic enterotoxin 105 kDa component (91 aa).

The cofactor is Zn(2+).

It is found in the secreted. This protein is a metalloprotease with gelatinolytic and collagenolytic activity and is a component of the non-hemolytic enterotoxin complex (NHE). The sequence is that of Non-hemolytic enterotoxin 105 kDa component from Bacillus cereus.